The primary structure comprises 149 residues: Calmodulin (149 aa).

Ala2 bears the N-acetylalanine mark. EF-hand domains follow at residues 8 to 43 (EQIAEFKEAFSLFDKDGDGCITTKELGTVMRSLGQN), 44 to 79 (PTEAELQDMISEVDADQNGTIDFPEFLNLMARKMKD), 81 to 116 (DSEEELKEAFKVFDKDQNGFISAAELRHVMTNLGEK), and 117 to 149 (LTDEEVDEMIREADIDGDGQVNYEEFVRMMLAK). Ca(2+) contacts are provided by Asp21, Asp23, Asp25, Cys27, Glu32, Asp57, Asp59, Asn61, Thr63, Glu68, Asp94, Asp96, Asn98, and Glu105. Lys116 carries the post-translational modification N6,N6,N6-trimethyllysine. 5 residues coordinate Ca(2+): Asp130, Asp132, Asp134, Gln136, and Glu141.

Belongs to the calmodulin family.

In terms of biological role, calmodulin mediates the control of a large number of enzymes, ion channels and other proteins by Ca(2+). Among the enzymes to be stimulated by the calmodulin-Ca(2+) complex are a number of protein kinases and phosphatases. The sequence is that of Calmodulin (CALM1) from Solanum lycopersicum (Tomato).